We begin with the raw amino-acid sequence, 281 residues long: Probable feruloyl esterase A (281 aa).

A signal peptide spans 1–21 (MKQFSAKFALALSAAAGQALA). 3 disulfide bridges follow: Cys50–Cys279, Cys112–Cys115, and Cys248–Cys255. Substrate is bound at residue Asp98. N-linked (GlcNAc...) asparagine glycosylation is present at Asn100. Tyr101 contributes to the substrate binding site. The Nucleophile role is filled by Ser154. A glycan (N-linked (GlcNAc...) asparagine) is linked at Asn173. Asp215 (charge relay system) is an active-site residue. His268 provides a ligand contact to substrate. His268 acts as the Charge relay system in catalysis.

The protein belongs to the AB hydrolase superfamily. FaeA family.

The protein resides in the secreted. It carries out the reaction feruloyl-polysaccharide + H2O = ferulate + polysaccharide.. Functionally, involved in degradation of plant cell walls. Hydrolyzes the feruloyl-arabinose ester bond in arabinoxylans, and the feruloyl-galactose ester bond in pectin. This is Probable feruloyl esterase A (faeA) from Aspergillus terreus (strain NIH 2624 / FGSC A1156).